Consider the following 944-residue polypeptide: Protocadherin gamma-C5 (944 aa).

Positions 1-29 (MGPKTLPQLAGKWQVLCMLSLCCWGWVSG) are cleaved as a signal peptide. Cadherin domains lie at 30 to 133 (QLRY…SPSF), 134 to 242 (ATPE…APTF), 243 to 350 (QSSV…APEV), 351 to 454 (LLAS…APRF), 455 to 564 (NQQL…APAV), and 571 to 677 (WEHS…MPKS). The Extracellular segment spans residues 30-693 (QLRYSVVEES…PPERSDLTLY (664 aa)). N-linked (GlcNAc...) asparagine glycosylation is found at Asn265, Asn443, and Asn547. A helical membrane pass occupies residues 694 to 714 (LIVALATVSLLSLVTFTFLSA). The Cytoplasmic segment spans residues 715–944 (KCLQGNADGD…KKKSGKKEKK (230 aa)). Disordered regions lie at residues 722 to 747 (DGDGGGGQCCRRQDSPSPDFYKQSSP), 812 to 853 (SNTL…WPNN), and 914 to 944 (ATLTNAAGKRDGKAPAGGNGNKKKSGKKEKK). Positions 820 to 853 (QQAPPNTDWRFSQAQRPGTSGSQNGDDTGTWPNN) are enriched in polar residues. Over residues 934 to 944 (NKKKSGKKEKK) the composition is skewed to basic residues.

Its subcellular location is the cell membrane. Potential calcium-dependent cell-adhesion protein. May be involved in the establishment and maintenance of specific neuronal connections in the brain. This chain is Protocadherin gamma-C5 (PCDHGC5), found in Homo sapiens (Human).